The chain runs to 65 residues: Metallothionein-like protein 3B (65 aa).

The protein belongs to the metallothionein superfamily. Type 15 family. As to expression, expressed in leaves and rachis.

Its function is as follows. Metallothioneins have a high content of cysteine residues that bind various heavy metals. The protein is Metallothionein-like protein 3B (MT3B) of Oryza sativa subsp. japonica (Rice).